Reading from the N-terminus, the 213-residue chain is Putative nascent polypeptide-associated complex subunit alpha-like protein (213 aa).

Residues 1 to 46 (MPGEATETVPAIEQQLLQPQAETGSGTESDSDESVPELEEQDSTQV) form a disordered region. Polar residues predominate over residues 15 to 28 (QLLQPQAETGSGTE). Residues 29 to 42 (SDSDESVPELEEQD) are compositionally biased toward acidic residues. Residues Ser-43 and Ser-131 each carry the phosphoserine modification. Residues 69–134 (RRSEKKARKA…AKIEDLSQEA (66 aa)) enclose the NAC-A/B domain. N6-acetyllysine; alternate is present on Lys-141. A Glycyl lysine isopeptide (Lys-Gly) (interchain with G-Cter in SUMO2); alternate cross-link involves residue Lys-141. At Thr-160 the chain carries Phosphothreonine. 3 positions are modified to phosphoserine: Ser-165, Ser-185, and Ser-201. A UBA domain is found at 175 to 211 (VEIKDIELVLSQANVWGAKAVRALKNSNDIVNAIMEL). Phosphothreonine is present on Thr-212.

This sequence belongs to the NAC-alpha family.

This is Putative nascent polypeptide-associated complex subunit alpha-like protein from Homo sapiens (Human).